A 115-amino-acid polypeptide reads, in one-letter code: Phosphoribosyl-AMP cyclohydrolase (115 aa).

Asp80 is a Mg(2+) binding site. Cys81 lines the Zn(2+) pocket. 2 residues coordinate Mg(2+): Asp82 and Asp84. Residues Cys97 and Cys104 each contribute to the Zn(2+) site.

It belongs to the PRA-CH family. As to quaternary structure, homodimer. Requires Mg(2+) as cofactor. Zn(2+) is required as a cofactor.

It localises to the cytoplasm. It catalyses the reaction 1-(5-phospho-beta-D-ribosyl)-5'-AMP + H2O = 1-(5-phospho-beta-D-ribosyl)-5-[(5-phospho-beta-D-ribosylamino)methylideneamino]imidazole-4-carboxamide. The protein operates within amino-acid biosynthesis; L-histidine biosynthesis; L-histidine from 5-phospho-alpha-D-ribose 1-diphosphate: step 3/9. In terms of biological role, catalyzes the hydrolysis of the adenine ring of phosphoribosyl-AMP. The sequence is that of Phosphoribosyl-AMP cyclohydrolase from Mycobacterium sp. (strain MCS).